The primary structure comprises 230 residues: Cutinase 1 (230 aa).

A signal peptide spans 1 to 16 (MKFFALTTLLAATASA). Residues 17–31 (LPTSNPAQELEARQL) constitute a propeptide that is removed on maturation. G32 carries the post-translational modification N-D-glucuronoyl glycine. The cysteines at positions 47 and 125 are disulfide-linked. S136 functions as the Nucleophile in the catalytic mechanism. C187 and C194 form a disulfide bridge. The active site involves D191. Residue H204 is the Proton donor/acceptor of the active site.

The protein belongs to the cutinase family. In terms of processing, the 2 disulfide bonds play a critical role in holding the catalytic residues in juxta-position; reduction of the disulfide bridges results in the complete inactivation of the enzyme. O-glycosylated; contains one mole each of mannose, arabinose, N-acetylglucosamine, and glucuronic acid.

The protein resides in the secreted. The catalysed reaction is cutin + H2O = cutin monomers.. Inhibited by n-undecyl phosphonate (C11Y4). Inhibited by paraoxon. Catalyzes the hydrolysis of complex carboxylic polyesters found in the cell wall of plants. Degrades cutin, a macromolecule that forms the structure of the plant cuticle. Allows pathogenic fungi to penetrate through the cuticular barrier into the host plant during the initial stage of fungal infection. In Fusarium vanettenii (Neocosmospora pisi), this protein is Cutinase 1 (CUT1).